We begin with the raw amino-acid sequence, 307 residues long: Transcription initiation factor IIB (307 aa).

2 consecutive repeat copies span residues 123 to 206 (NELE…LREL) and 217 to 298 (DYVT…ELTQ).

The protein belongs to the TFIIB family.

In terms of biological role, stabilizes TBP binding to an archaeal box-A promoter. Also responsible for recruiting RNA polymerase II to the pre-initiation complex (DNA-TBP-TFIIB). This chain is Transcription initiation factor IIB, found in Sulfolobus acidocaldarius (strain ATCC 33909 / DSM 639 / JCM 8929 / NBRC 15157 / NCIMB 11770).